The sequence spans 564 residues: Septation ring formation regulator EzrA (564 aa).

Residues 1–2 lie on the Extracellular side of the membrane; the sequence is MV. The chain crosses the membrane as a helical span at residues 3–21; that stretch reads FVISVILAIIVILTIGLIL. Residues 22–564 lie on the Cytoplasmic side of the membrane; the sequence is RKRIYDKVDH…IEENQLTLNR (543 aa). 4 coiled-coil regions span residues 101 to 140, 168 to 215, 251 to 436, and 468 to 537; these read ANNI…REEV, FDKK…MEQF, GFDK…KKSN, and DIAK…ELSL.

It belongs to the EzrA family.

It is found in the cell membrane. Functionally, negative regulator of FtsZ ring formation; modulates the frequency and position of FtsZ ring formation. Inhibits FtsZ ring formation at polar sites. Interacts either with FtsZ or with one of its binding partners to promote depolymerization. The protein is Septation ring formation regulator EzrA of Oceanobacillus iheyensis (strain DSM 14371 / CIP 107618 / JCM 11309 / KCTC 3954 / HTE831).